Here is a 684-residue protein sequence, read N- to C-terminus: Protein LDB19 (684 aa).

Disordered stretches follow at residues 462-483, 510-531, and 593-632; these read GEAQ…PAGL, SAEE…DKRI, and SSRV…TSGS. Positions 593–602 are enriched in low complexity; sequence SSRVVSGPES.

It belongs to the LDB19 family.

The protein resides in the cytoplasm. Its subcellular location is the golgi apparatus. Functionally, may be involved in protein-linked oligosaccharide phosphorylation. This chain is Protein LDB19 (LDB19), found in Eremothecium gossypii (strain ATCC 10895 / CBS 109.51 / FGSC 9923 / NRRL Y-1056) (Yeast).